Reading from the N-terminus, the 434-residue chain is GTPase Der (434 aa).

2 consecutive EngA-type G domains span residues 3–167 (NIVA…PEIE) and 175–350 (PRFA…ESRS). GTP is bound by residues 9-16 (GRPNVGKS), 56-60 (DTGGY), 119-122 (NKVD), 181-188 (GRPNAGKS), 228-232 (DTAGI), and 293-296 (NKWD). The 84-residue stretch at 351–434 (KKIKTRQFND…VPISIFFRKK (84 aa)) folds into the KH-like domain.

It belongs to the TRAFAC class TrmE-Era-EngA-EngB-Septin-like GTPase superfamily. EngA (Der) GTPase family. As to quaternary structure, associates with the 50S ribosomal subunit.

Functionally, GTPase that plays an essential role in the late steps of ribosome biogenesis. This is GTPase Der from Christiangramia forsetii (strain DSM 17595 / CGMCC 1.15422 / KT0803) (Gramella forsetii).